The sequence spans 278 residues: Large ribosomal subunit protein uL2 (278 aa).

A disordered region spans residues 218 to 278; it reads RPHNRGVVMN…IMRSRHQRKK (61 aa).

Belongs to the universal ribosomal protein uL2 family. Part of the 50S ribosomal subunit. Forms a bridge to the 30S subunit in the 70S ribosome.

One of the primary rRNA binding proteins. Required for association of the 30S and 50S subunits to form the 70S ribosome, for tRNA binding and peptide bond formation. It has been suggested to have peptidyltransferase activity; this is somewhat controversial. Makes several contacts with the 16S rRNA in the 70S ribosome. This Rhizobium etli (strain ATCC 51251 / DSM 11541 / JCM 21823 / NBRC 15573 / CFN 42) protein is Large ribosomal subunit protein uL2.